The chain runs to 350 residues: Protein-glutamate methylesterase/protein-glutamine glutaminase (350 aa).

The 118-residue stretch at 5–122 (RVLCVDDSAL…REGMLAYSEL (118 aa)) folds into the Response regulatory domain. A 4-aspartylphosphate modification is found at D56. Residues 153-345 (LLSSEKLIAI…QRMLAQISAG (193 aa)) form the CheB-type methylesterase domain. Catalysis depends on residues S165, H191, and D287.

It belongs to the CheB family. In terms of processing, phosphorylated by CheA. Phosphorylation of the N-terminal regulatory domain activates the methylesterase activity.

Its subcellular location is the cytoplasm. The enzyme catalyses [protein]-L-glutamate 5-O-methyl ester + H2O = L-glutamyl-[protein] + methanol + H(+). The catalysed reaction is L-glutaminyl-[protein] + H2O = L-glutamyl-[protein] + NH4(+). Functionally, involved in chemotaxis. Part of a chemotaxis signal transduction system that modulates chemotaxis in response to various stimuli. Catalyzes the demethylation of specific methylglutamate residues introduced into the chemoreceptors (methyl-accepting chemotaxis proteins or MCP) by CheR. Also mediates the irreversible deamidation of specific glutamine residues to glutamic acid. Does not interact with the C-terminal pentapeptide of the chemoreceptors. This is Protein-glutamate methylesterase/protein-glutamine glutaminase from Pectobacterium atrosepticum (strain SCRI 1043 / ATCC BAA-672) (Erwinia carotovora subsp. atroseptica).